We begin with the raw amino-acid sequence, 297 residues long: uncharacterized protein (297 aa).

The interval 46–229 (LGAGGPPPPP…RPPPYIAPPP (184 aa)) is disordered. The segment covering 65-81 (PEGPGGPPQHAPPNPPP) has biased composition (pro residues). A compositionally biased stretch (gly residues) spans 90-100 (RGGGAGGAGDG). The span at 106–117 (DAAEEYGPEDLD) shows a compositional bias: acidic residues. A compositionally biased stretch (basic residues) spans 137–151 (HQTRGPGRRAKKRLR). Positions 184–201 (ATPQAAPAAKTTPASPQT) are enriched in low complexity. The segment covering 219–229 (HRPPPYIAPPP) has biased composition (pro residues).

This is an uncharacterized protein from Torque teno virus (isolate Human/China/CT23F/2001) (TTV).